An 86-amino-acid polypeptide reads, in one-letter code: Small ribosomal subunit protein bS20 (86 aa).

Positions 1-11 (MANIKQQKKRN) are enriched in basic residues. Positions 1-20 (MANIKQQKKRNKTNEKRRLQ) are disordered.

It belongs to the bacterial ribosomal protein bS20 family.

Binds directly to 16S ribosomal RNA. This Aster yellows witches'-broom phytoplasma (strain AYWB) protein is Small ribosomal subunit protein bS20.